The chain runs to 490 residues: Probable cytosol aminopeptidase (490 aa).

Residues Lys262 and Asp267 each contribute to the Mn(2+) site. The active site involves Lys274. 3 residues coordinate Mn(2+): Asp285, Asp344, and Glu346. Arg348 is a catalytic residue.

This sequence belongs to the peptidase M17 family. Requires Mn(2+) as cofactor.

The protein resides in the cytoplasm. The enzyme catalyses Release of an N-terminal amino acid, Xaa-|-Yaa-, in which Xaa is preferably Leu, but may be other amino acids including Pro although not Arg or Lys, and Yaa may be Pro. Amino acid amides and methyl esters are also readily hydrolyzed, but rates on arylamides are exceedingly low.. The catalysed reaction is Release of an N-terminal amino acid, preferentially leucine, but not glutamic or aspartic acids.. Functionally, presumably involved in the processing and regular turnover of intracellular proteins. Catalyzes the removal of unsubstituted N-terminal amino acids from various peptides. The sequence is that of Probable cytosol aminopeptidase from Xanthomonas axonopodis pv. citri (strain 306).